We begin with the raw amino-acid sequence, 260 residues long: Proline-rich protein 33 (260 aa).

Residues 29–132 (GVQTVSPRPE…KVAPKPSRSG (104 aa)) are disordered. Positions 73–83 (GPSPYSPPPAA) are enriched in pro residues.

This is Proline-rich protein 33 (Prr33) from Mus musculus (Mouse).